The following is a 621-amino-acid chain: Chaperone protein DnaK (621 aa).

Residue T175 is modified to Phosphothreonine; by autocatalysis. A compositionally biased stretch (basic and acidic residues) spans E499 to N516. Disordered stretches follow at residues E499–N520 and A583–K621. Positions A583–G602 are enriched in low complexity. Positions G603–K621 are enriched in acidic residues.

This sequence belongs to the heat shock protein 70 family.

In terms of biological role, acts as a chaperone. The sequence is that of Chaperone protein DnaK from Bifidobacterium animalis subsp. lactis (strain AD011).